The chain runs to 364 residues: Chorismate synthase (364 aa).

A disordered region spans residues 41–60; sequence MQHDLDRRRPGTSRYTTARR. Positions 48 and 54 each coordinate NADP(+). FMN-binding positions include 125–127, 238–239, G278, 293–297, and R319; these read RSS, NA, and KPTSS.

This sequence belongs to the chorismate synthase family. As to quaternary structure, homotetramer. The cofactor is FMNH2.

It carries out the reaction 5-O-(1-carboxyvinyl)-3-phosphoshikimate = chorismate + phosphate. The protein operates within metabolic intermediate biosynthesis; chorismate biosynthesis; chorismate from D-erythrose 4-phosphate and phosphoenolpyruvate: step 7/7. Catalyzes the anti-1,4-elimination of the C-3 phosphate and the C-6 proR hydrogen from 5-enolpyruvylshikimate-3-phosphate (EPSP) to yield chorismate, which is the branch point compound that serves as the starting substrate for the three terminal pathways of aromatic amino acid biosynthesis. This reaction introduces a second double bond into the aromatic ring system. This is Chorismate synthase from Shewanella baltica (strain OS185).